Consider the following 856-residue polypeptide: Valine--tRNA ligase (856 aa).

The short motif at 47–57 (PTASGVLHIGH) is the 'HIGH' region element. The 'KMSKS' region signature appears at 578-582 (KMSKS). Lys581 contacts ATP.

This sequence belongs to the class-I aminoacyl-tRNA synthetase family. ValS type 2 subfamily. Monomer.

Its subcellular location is the cytoplasm. The enzyme catalyses tRNA(Val) + L-valine + ATP = L-valyl-tRNA(Val) + AMP + diphosphate. Its function is as follows. Catalyzes the attachment of valine to tRNA(Val). As ValRS can inadvertently accommodate and process structurally similar amino acids such as threonine, to avoid such errors, it has a 'posttransfer' editing activity that hydrolyzes mischarged Thr-tRNA(Val) in a tRNA-dependent manner. The sequence is that of Valine--tRNA ligase from Tropheryma whipplei (strain TW08/27) (Whipple's bacillus).